The primary structure comprises 263 residues: MVEFVNDPNFKDLVVDTTIDNRNDEEPMTIRNFTELMIQFYKLGWMRGSGGAMGCISGSELMISPSALQKERIREQDVFVYNMKDKTEVQRPPNKRITVSSCSVLFSLIMKETGSECVIHTHSKCANLITQLIKSNVFEISHQEYIKGIYDPFSGKALKYSDTLTIPIIDNMPSESQLLEPIRGVLENYPQAIAVLVRNHGLFVWGPTWESTKIMTECIDYLLELSIEMLKNNIPLVNEEAFEKEDNLSDKMRTLMFGDMAPV.

Cys102 lines the substrate pocket. Residues His120 and His122 each contribute to the Zn(2+) site. Glu144 acts as the Proton donor/acceptor in catalysis. Residue His200 coordinates Zn(2+).

It belongs to the aldolase class II family. MtnB subfamily. Zn(2+) is required as a cofactor.

It localises to the cytoplasm. It catalyses the reaction 5-(methylsulfanyl)-D-ribulose 1-phosphate = 5-methylsulfanyl-2,3-dioxopentyl phosphate + H2O. Its pathway is amino-acid biosynthesis; L-methionine biosynthesis via salvage pathway; L-methionine from S-methyl-5-thio-alpha-D-ribose 1-phosphate: step 2/6. Its function is as follows. Catalyzes the dehydration of methylthioribulose-1-phosphate (MTRu-1-P) into 2,3-diketo-5-methylthiopentyl-1-phosphate (DK-MTP-1-P). In Caenorhabditis elegans, this protein is Probable methylthioribulose-1-phosphate dehydratase.